A 248-amino-acid chain; its full sequence is MSARLEVEILTLFPRMCEGYLAESILGKAREAGIVSVSVSDVREHARGKHRVADDAPYGGGAGMVMKPEPLTEAIEAARARLPGALVALTSPRGARLDQALARRLATHGRLVLVCGRYEGVDERVLAAVDMEVSIGDFVLTGGELAALCVVDAAARLVPGVLGNEASAGAESFAGEDTLLEYPQYTRPPDFRGMKVPEVLLSGDHRRIERWRRREALRVTRERRPDLLERARLTENDLRLIDAGDDEL.

Residues G116 and 135-140 (IGDFVL) each bind S-adenosyl-L-methionine.

Belongs to the RNA methyltransferase TrmD family. In terms of assembly, homodimer.

Its subcellular location is the cytoplasm. It carries out the reaction guanosine(37) in tRNA + S-adenosyl-L-methionine = N(1)-methylguanosine(37) in tRNA + S-adenosyl-L-homocysteine + H(+). Its function is as follows. Specifically methylates guanosine-37 in various tRNAs. The protein is tRNA (guanine-N(1)-)-methyltransferase of Anaeromyxobacter sp. (strain Fw109-5).